The sequence spans 876 residues: Alanine--tRNA ligase (876 aa).

The residue at position 74 (lysine 74) is an N6-acetyllysine. Zn(2+) contacts are provided by histidine 564, histidine 568, cysteine 666, and histidine 670.

The protein belongs to the class-II aminoacyl-tRNA synthetase family. Homotetramer. Zn(2+) serves as cofactor.

The protein resides in the cytoplasm. It carries out the reaction tRNA(Ala) + L-alanine + ATP = L-alanyl-tRNA(Ala) + AMP + diphosphate. In terms of biological role, catalyzes the attachment of alanine to tRNA(Ala) in a two-step reaction: alanine is first activated by ATP to form Ala-AMP and then transferred to the acceptor end of tRNA(Ala). Also edits incorrectly charged Ser-tRNA(Ala) and Gly-tRNA(Ala) via its editing domain. The sequence is that of Alanine--tRNA ligase from Escherichia coli O6:K15:H31 (strain 536 / UPEC).